The chain runs to 157 residues: Parasitophorous vacuole membrane protein S16 (157 aa).

The first 25 residues, 1-25 (MNIRKFIPSLALMLIFFAFANLVLS), serve as a signal peptide directing secretion. The Extracellular segment spans residues 26–105 (DANDKAKKPA…DKKTTVNRNL (80 aa)). The tract at residues 30–74 (KAKKPAGKGSPSTLQTPGSSSGASLHAVGPNQGGLSQGLSGKDSA) is disordered. Residues 39-52 (SPSTLQTPGSSSGA) show a composition bias toward polar residues. A helical transmembrane segment spans residues 106–126 (IISTAVTNMIMLIILSGIVGF). The Cytoplasmic segment spans residues 127–157 (KVKKTKNADDDKGDKDKDKDNTDEGDEGDDS). The segment at 130–157 (KTKNADDDKGDKDKDKDNTDEGDEGDDS) is disordered. The span at 132 to 148 (KNADDDKGDKDKDKDNT) shows a compositional bias: basic and acidic residues.

The protein localises to the parasitophorous vacuole membrane. Its subcellular location is the vacuole. Involved in male gametogenesis. Required for exflagellation of male gametocytes. May play a role in parasite transmission in the mosquito. Binds to the mosquito vector midgut. This Plasmodium falciparum (isolate 3D7) protein is Parasitophorous vacuole membrane protein S16.